Here is a 414-residue protein sequence, read N- to C-terminus: Probable aminotransferase TAT2 (414 aa).

This sequence belongs to the class-I pyridoxal-phosphate-dependent aminotransferase family. Pyridoxal 5'-phosphate serves as cofactor.

The polypeptide is Probable aminotransferase TAT2 (Arabidopsis thaliana (Mouse-ear cress)).